Reading from the N-terminus, the 857-residue chain is Median body protein (857 aa).

Coiled coils occupy residues 169–546 (HNAL…MRTE) and 571–793 (LAHL…TKAM).

It is found in the cytoplasm. Its subcellular location is the cytoskeleton. Structural component of the ventral disk involved in maintanance of a domed conformation of the disk required for proper attachment. May have a role in immobilizing the microtubules between cell divisions. The chain is Median body protein from Giardia intestinalis (strain ATCC 50803 / WB clone C6) (Giardia lamblia).